We begin with the raw amino-acid sequence, 349 residues long: N-acetyltaurine hydrolase (349 aa).

Residues His26, His28, Glu169, His201, His230, and Asp298 each contribute to the a divalent metal cation site.

Belongs to the metallo-dependent hydrolases superfamily. Phosphotriesterase family. A divalent metal cation is required as a cofactor.

It localises to the cytoplasm. The protein localises to the cytosol. The enzyme catalyses N-acetyltaurine + H2O = taurine + acetate. The catalysed reaction is N-propanoyltaurine + H2O = propanoate + taurine. It catalyses the reaction N-acetyl-L-methionine + H2O = L-methionine + acetate. It carries out the reaction N-acetyl-L-isoleucine + H2O = L-isoleucine + acetate. The enzyme catalyses N-acetyl-L-leucine + H2O = L-leucine + acetate. The catalysed reaction is N-acetyl-L-valine + H2O = L-valine + acetate. Functionally, N-acetyltaurine hydrolase that catalyzes the hydrolysis of N-acetyltaurine into taurine and acetate. PTER also acts on other N-acetyl amino acids (Met, Ile, Leu, Val) and N-propionyltaurine, but at lower rates. This chain is N-acetyltaurine hydrolase (pter), found in Salmo salar (Atlantic salmon).